The primary structure comprises 335 residues: MQLEIINPESTLINDVVAHRIAFSIGSNFNIYWYGIIFVCGFLLAILTYSLRLKFHYKVPYDPGFYYIFLAIPMTIIGARLWSLAIGDAKDFFDFRNGGLAIQGGVIAGVLSAAIYFPLILRMPKYHVRDLDADGNVIIRQPSMWIYADAIIPTILIGQALGRWGNFINGEIFGAESTVNDLQWLKKAMPAVFEGMKHYFIEGDKTLFTIYQPLFLYESFFNVIVFVFIYFGLSYIKQLKIGFVSMSYFFFYGVIRFSTESARAPQFSFAGTYVINSLLLIFGVLGALYVQFIAPILRKRFLLDAIIELFYKKKQQAHKFGQLRNPEEFLYYCHK.

Transmembrane regions (helical) follow at residues 31–51 (IYWY…TYSL), 67–87 (YIFL…LAIG), and 100–120 (LAIQ…FPLI). Arginine 163 serves as a coordination point for a 1,2-diacyl-sn-glycero-3-phospho-(1'-sn-glycerol). 3 helical membrane-spanning segments follow: residues 213 to 233 (PLFL…YFGL), 235 to 255 (YIKQ…YGVI), and 277 to 297 (SLLL…APIL).

It belongs to the Lgt family.

Its subcellular location is the cell membrane. It carries out the reaction L-cysteinyl-[prolipoprotein] + a 1,2-diacyl-sn-glycero-3-phospho-(1'-sn-glycerol) = an S-1,2-diacyl-sn-glyceryl-L-cysteinyl-[prolipoprotein] + sn-glycerol 1-phosphate + H(+). It functions in the pathway protein modification; lipoprotein biosynthesis (diacylglyceryl transfer). In terms of biological role, catalyzes the transfer of the diacylglyceryl group from phosphatidylglycerol to the sulfhydryl group of the N-terminal cysteine of a prolipoprotein, the first step in the formation of mature lipoproteins. This chain is Phosphatidylglycerol--prolipoprotein diacylglyceryl transferase, found in Ureaplasma urealyticum serovar 10 (strain ATCC 33699 / Western).